A 410-amino-acid chain; its full sequence is Elongation factor Tu (410 aa).

A tr-type G domain is found at 10-219 (KTHVNVGTIG…ALDTYIPDPV (210 aa)). GTP is bound by residues 19 to 26 (GHVDHGKT), 88 to 92 (DCPGH), and 143 to 146 (NKCD). Position 26 (T26) interacts with Mg(2+).

This sequence belongs to the TRAFAC class translation factor GTPase superfamily. Classic translation factor GTPase family. EF-Tu/EF-1A subfamily. As to quaternary structure, monomer.

It localises to the cytoplasm. It catalyses the reaction GTP + H2O = GDP + phosphate + H(+). Functionally, GTP hydrolase that promotes the GTP-dependent binding of aminoacyl-tRNA to the A-site of ribosomes during protein biosynthesis. In Brachyspira hyodysenteriae (Treponema hyodysenteriae), this protein is Elongation factor Tu.